The sequence spans 309 residues: Tyrosine recombinase XerD (309 aa).

The 86-residue stretch at 3-88 folds into the Core-binding (CB) domain; sequence MRASLAIENF…ALRQFFRFLY (86 aa). A Tyr recombinase domain is found at 109–302; the sequence is PLPKIMSVEN…LEERLHKLVS (194 aa). Residues Arg158, Lys182, His254, Arg257, and His280 contribute to the active site. Tyr289 acts as the O-(3'-phospho-DNA)-tyrosine intermediate in catalysis.

Belongs to the 'phage' integrase family. XerD subfamily. Forms a cyclic heterotetrameric complex composed of two molecules of XerC and two molecules of XerD.

Its subcellular location is the cytoplasm. In terms of biological role, site-specific tyrosine recombinase, which acts by catalyzing the cutting and rejoining of the recombining DNA molecules. The XerC-XerD complex is essential to convert dimers of the bacterial chromosome into monomers to permit their segregation at cell division. It also contributes to the segregational stability of plasmids. This Brucella melitensis biotype 1 (strain ATCC 23456 / CCUG 17765 / NCTC 10094 / 16M) protein is Tyrosine recombinase XerD.